The chain runs to 192 residues: Elongation factor P (192 aa).

The residue at position 37 (Lys37) is an N6-(3,6-diaminohexanoyl)-5-hydroxylysine.

Belongs to the elongation factor P family. In terms of processing, may be beta-lysylated on the epsilon-amino group of Lys-37 by the combined action of EpmA and EpmB, and then hydroxylated on the C5 position of the same residue by EpmC (if this protein is present). Lysylation is critical for the stimulatory effect of EF-P on peptide-bond formation. The lysylation moiety may extend toward the peptidyltransferase center and stabilize the terminal 3-CCA end of the tRNA. Hydroxylation of the C5 position on Lys-37 may allow additional potential stabilizing hydrogen-bond interactions with the P-tRNA.

It localises to the cytoplasm. The protein operates within protein biosynthesis; polypeptide chain elongation. Functionally, involved in peptide bond synthesis. Alleviates ribosome stalling that occurs when 3 or more consecutive Pro residues or the sequence PPG is present in a protein, possibly by augmenting the peptidyl transferase activity of the ribosome. Modification of Lys-37 is required for alleviation. This Acinetobacter baylyi (strain ATCC 33305 / BD413 / ADP1) protein is Elongation factor P.